A 328-amino-acid chain; its full sequence is Ketol-acid reductoisomerase (NADP(+)) (328 aa).

In terms of domain architecture, KARI N-terminal Rossmann spans 2–182 (AKIYRDVDAS…GATRAGVIET (181 aa)). Residues 25-28 (YGIQ), R48, S53, and 83-86 (DMEQ) each bind NADP(+). H108 is a catalytic residue. Residue G134 coordinates NADP(+). One can recognise a KARI C-terminal knotted domain in the interval 183-328 (TFAEETETDL…IEMRRLLFGQ (146 aa)). The Mg(2+) site is built by D191, E195, E227, and E231. Substrate is bound at residue S252.

Belongs to the ketol-acid reductoisomerase family. Requires Mg(2+) as cofactor.

The catalysed reaction is (2R)-2,3-dihydroxy-3-methylbutanoate + NADP(+) = (2S)-2-acetolactate + NADPH + H(+). The enzyme catalyses (2R,3R)-2,3-dihydroxy-3-methylpentanoate + NADP(+) = (S)-2-ethyl-2-hydroxy-3-oxobutanoate + NADPH + H(+). It participates in amino-acid biosynthesis; L-isoleucine biosynthesis; L-isoleucine from 2-oxobutanoate: step 2/4. The protein operates within amino-acid biosynthesis; L-valine biosynthesis; L-valine from pyruvate: step 2/4. In terms of biological role, involved in the biosynthesis of branched-chain amino acids (BCAA). Catalyzes an alkyl-migration followed by a ketol-acid reduction of (S)-2-acetolactate (S2AL) to yield (R)-2,3-dihydroxy-isovalerate. In the isomerase reaction, S2AL is rearranged via a Mg-dependent methyl migration to produce 3-hydroxy-3-methyl-2-ketobutyrate (HMKB). In the reductase reaction, this 2-ketoacid undergoes a metal-dependent reduction by NADPH to yield (R)-2,3-dihydroxy-isovalerate. In Pyrobaculum arsenaticum (strain DSM 13514 / JCM 11321 / PZ6), this protein is Ketol-acid reductoisomerase (NADP(+)).